We begin with the raw amino-acid sequence, 312 residues long: tRNA pseudouridine synthase B (312 aa).

D49 (nucleophile) is an active-site residue.

This sequence belongs to the pseudouridine synthase TruB family. Type 1 subfamily.

It catalyses the reaction uridine(55) in tRNA = pseudouridine(55) in tRNA. Its function is as follows. Responsible for synthesis of pseudouridine from uracil-55 in the psi GC loop of transfer RNAs. This is tRNA pseudouridine synthase B from Chelativorans sp. (strain BNC1).